Consider the following 418-residue polypeptide: Beta-arrestin-1 (418 aa).

An interaction with SRC region spans residues 1–163 (MGDKGTRVFK…LEEKIHKRNS (163 aa)). The tract at residues 45–86 (PEYLKERRVYVTLTCAFRYGREDLDVLGLTFRKDLFVANVQS) is interaction with CHRM2. Residue Tyr-47 is modified to Phosphotyrosine. 1D-myo-inositol hexakisphosphate contacts are provided by Lys-250, Met-255, Lys-324, and Lys-326. Positions 318 to 418 (IVSYKVKVKL…GTGSPRLNDR (101 aa)) are interaction with TRAF6. Residues 353-375 (HPKPKEEPPHREVPEHETPVDTN) form a disordered region. Residues 355-371 (KPKEEPPHREVPEHETP) show a composition bias toward basic and acidic residues. The [DE]-X(1,2)-F-X-X-[FL]-X-X-X-R motif motif lies at 385-395 (DIVFEDFARQR). Residues 397-418 (KGMKDDKEEEEDGTGSPRLNDR) form a disordered region. At Ser-412 the chain carries Phosphoserine; by GRK5.

It belongs to the arrestin family. As to quaternary structure, monomer. Homodimer. Homooligomer; the self-association is mediated by InsP6-binding. Heterooligomer with ARRB2; the association is mediated by InsP6-binding. Interacts with ADRB2 (phosphorylated). Interacts with CHRM2 (phosphorylated). Interacts with LHCGR. Interacts with CYTH2 and CASR. Interacts with AP2B1 (dephosphorylated at 'Tyr-737'); phosphorylation of AP2B1 at 'Tyr-737' disrupts the interaction. Interacts (dephosphorylated at Ser-412) with CLTC. Interacts with CCR2 and GRK2. Interacts with CRR5. Interacts with PTAFR (phosphorylated on serine residues). Interacts with CLTC and MAP2K3. Interacts with CREB1. Interacts with TRAF6. Interacts with IGF1R and MDM2. Interacts with C5AR1. Interacts with PDE4D. Interacts with SRC (via the SH3 domain and the protein kinase domain); the interaction is independent of the phosphorylation state of SRC C-terminus. Interacts with TACR1. Interacts with RAF1. Interacts with CHUK, IKBKB and MAP3K14. Interacts with DVL1; the interaction is enhanced by phosphorylation of DVL1. Interacts with DVL2; the interaction is enhanced by phosphorylation of DVL2. Interacts with IGF1R. Associates with MAP kinase p38. Part of a MAPK signaling complex consisting of TACR1, ARRB1, SRC, MAPK1 (activated) and MAPK3 (activated). Part of a MAPK signaling complex consisting of F2RL1, ARRB1, RAF1, MAPK1 (activated) and MAPK3 (activated). Interacts with GPR143. Interacts with MAP2K4/MKK4. Interacts with HCK and CXCR1 (phosphorylated). Interacts with ACKR3 and ACKR4. Interacts with ARRDC1; the interaction is direct. Interacts with GPR61, GPR62 and GPR135. Post-translationally, constitutively phosphorylated at Ser-412 in the cytoplasm. At the plasma membrane, is rapidly dephosphorylated, a process that is required for clathrin binding and ADRB2 endocytosis but not for ADRB2 binding and desensitization. Once internalized, is rephosphorylated. In terms of processing, the ubiquitination status appears to regulate the formation and trafficking of beta-arrestin-GPCR complexes and signaling. Ubiquitination appears to occur GPCR-specific. Ubiquitinated by MDM2; the ubiquitination is required for rapid internalization of ADRB2. Deubiquitinated by USP33; the deubiquitination leads to a dissociation of the beta-arrestin-GPCR complex. Stimulation of a class A GPCR, such as ADRB2, induces transient ubiquitination and subsequently promotes association with USP33. In terms of tissue distribution, beta-arrestin 1A is found in cortex, cerebellum, striatum, pineal gland, retina and heart. Beta-arrestin 1B is found in spleen, lung, pituitary and kidney.

The protein resides in the cytoplasm. The protein localises to the nucleus. It is found in the cell membrane. Its subcellular location is the membrane. It localises to the clathrin-coated pit. The protein resides in the cell projection. The protein localises to the pseudopodium. It is found in the cytoplasmic vesicle. Functions in regulating agonist-mediated G-protein coupled receptor (GPCR) signaling by mediating both receptor desensitization and resensitization processes. During homologous desensitization, beta-arrestins bind to the GPRK-phosphorylated receptor and sterically preclude its coupling to the cognate G-protein; the binding appears to require additional receptor determinants exposed only in the active receptor conformation. The beta-arrestins target many receptors for internalization by acting as endocytic adapters (CLASPs, clathrin-associated sorting proteins) and recruiting the GPRCs to the adapter protein 2 complex 2 (AP-2) in clathrin-coated pits (CCPs). However, the extent of beta-arrestin involvement appears to vary significantly depending on the receptor, agonist and cell type. Internalized arrestin-receptor complexes traffic to intracellular endosomes, where they remain uncoupled from G-proteins. Two different modes of arrestin-mediated internalization occur. Class A receptors, like ADRB2, OPRM1, ENDRA, D1AR and ADRA1B dissociate from beta-arrestin at or near the plasma membrane and undergo rapid recycling. Class B receptors, like AVPR2, AGTR1, NTSR1, TRHR and TACR1 internalize as a complex with arrestin and traffic with it to endosomal vesicles, presumably as desensitized receptors, for extended periods of time. Receptor resensitization then requires that receptor-bound arrestin is removed so that the receptor can be dephosphorylated and returned to the plasma membrane. Involved in internalization of P2RY4 and UTP-stimulated internalization of P2RY2. Involved in phosphorylation-dependent internalization of OPRD1 ands subsequent recycling. Involved in the degradation of cAMP by recruiting cAMP phosphodiesterases to ligand-activated receptors. Beta-arrestins function as multivalent adapter proteins that can switch the GPCR from a G-protein signaling mode that transmits short-lived signals from the plasma membrane via small molecule second messengers and ion channels to a beta-arrestin signaling mode that transmits a distinct set of signals that are initiated as the receptor internalizes and transits the intracellular compartment. Acts as a signaling scaffold for MAPK pathways such as MAPK1/3 (ERK1/2). ERK1/2 activated by the beta-arrestin scaffold is largely excluded from the nucleus and confined to cytoplasmic locations such as endocytic vesicles, also called beta-arrestin signalosomes. Recruits c-Src/SRC to ADRB2 resulting in ERK activation. GPCRs for which the beta-arrestin-mediated signaling relies on both ARRB1 and ARRB2 (codependent regulation) include ADRB2, F2RL1 and PTH1R. For some GPCRs the beta-arrestin-mediated signaling relies on either ARRB1 or ARRB2 and is inhibited by the other respective beta-arrestin form (reciprocal regulation). Inhibits ERK1/2 signaling in AGTR1- and AVPR2-mediated activation (reciprocal regulation). Is required for SP-stimulated endocytosis of NK1R and recruits c-Src/SRC to internalized NK1R resulting in ERK1/2 activation, which is required for the antiapoptotic effects of SP. Is involved in proteinase-activated F2RL1-mediated ERK activity. Acts as a signaling scaffold for the AKT1 pathway. Is involved in alpha-thrombin-stimulated AKT1 signaling. Is involved in IGF1-stimulated AKT1 signaling leading to increased protection from apoptosis. Involved in activation of the p38 MAPK signaling pathway and in actin bundle formation. Involved in F2RL1-mediated cytoskeletal rearrangement and chemotaxis. Involved in AGTR1-mediated stress fiber formation by acting together with GNAQ to activate RHOA. Appears to function as signaling scaffold involved in regulation of MIP-1-beta-stimulated CCR5-dependent chemotaxis. Involved in attenuation of NF-kappa-B-dependent transcription in response to GPCR or cytokine stimulation by interacting with and stabilizing CHUK. May serve as nuclear messenger for GPCRs. Involved in OPRD1-stimulated transcriptional regulation by translocating to CDKN1B and FOS promoter regions and recruiting EP300 resulting in acetylation of histone H4. Involved in regulation of LEF1 transcriptional activity via interaction with DVL1 and/or DVL2 Also involved in regulation of receptors other than GPCRs. Involved in Toll-like receptor and IL-1 receptor signaling through the interaction with TRAF6 which prevents TRAF6 autoubiquitination and oligomerization required for activation of NF-kappa-B and JUN. Involved in IL8-mediated granule release in neutrophils. Binds phosphoinositides. Binds inositol hexakisphosphate (InsP6). Required for atypical chemokine receptor ACKR2-induced RAC1-LIMK1-PAK1-dependent phosphorylation of cofilin (CFL1) and for the up-regulation of ACKR2 from endosomal compartment to cell membrane, increasing its efficiency in chemokine uptake and degradation. Involved in the internalization of the atypical chemokine receptor ACKR3. Negatively regulates the NOTCH signaling pathway by mediating the ubiquitination and degradation of NOTCH1 by ITCH. Participates in the recruitment of the ubiquitin-protein ligase to the receptor. In Bos taurus (Bovine), this protein is Beta-arrestin-1 (ARRB1).